A 695-amino-acid polypeptide reads, in one-letter code: MAASSACLVGNGLSVNTTTKQRLSKHFSGRQTSFSSVIRTSKVNVVKASLDGKKKQEGRRDFLKILLGNAGVGLVASGKANADEQGVSSSRMSYSRFLEYLDKDRVNKVDLYENGTIAIVEAVSPELGNRVERVRVQLPGLSQELLQKLRAKNIDFAAHNAQEDQGSVLFNLIGNLAFPALLIGGLFLLSRRSGGGMGGPGGPGNPLQFGQSKAKFQMEPNTGVTFDDVAGVDEAKQDFMEVVEFLKKPERFTAVGAKIPKGVLLIGPPGTGKTLLAKAIAGEAGVPFFSISGSEFVEMFVGVGASRVRDLFKKAKENAPCIVFVDEIDAVGRQRGTGIGGGNDEREQTLNQLLTEMDGFEGNTGVIVVAATNRADILDSALLRPGRFDRQVSVDVPDVKGRTDILKVHAGNKKFDNDVSLEIIAMRTPGFSGADLANLLNEAAILAGRRARTSISSKEIDDSIDRIVAGMEGTVMTDGKSKSLVAYHEVGHAVCGTLTPGHDAVQKVTLIPRGQARGLTWFIPSDDPTLISKQQLFARIVGGLGGRAAEEIIFGDSEVTTGAVGDLQQITGLARQMVTTFGMSDIGPWSLMDSSAQSDVIMRMMARNSMSEKLAEDIDSAVKKLSDSAYEIALSHIKNNREAMDKLVEVLLEKETIGGDEFRAILSEFTEIPPENRVPSSTTTTPASAPTPAAV.

The N-terminal 47 residues, 1 to 47 (MAASSACLVGNGLSVNTTTKQRLSKHFSGRQTSFSSVIRTSKVNVVK), are a transit peptide targeting the chloroplast. The transit peptide at 48 to 82 (ASLDGKKKQEGRRDFLKILLGNAGVGLVASGKANA) directs the protein to the thylakoid. The Lumenal, thylakoid portion of the chain corresponds to 83 to 167 (DEQGVSSSRM…AHNAQEDQGS (85 aa)). The helical transmembrane segment at 168-188 (VLFNLIGNLAFPALLIGGLFL) threads the bilayer. Over 189–695 (LSRRSGGGMG…PASAPTPAAV (507 aa)) the chain is Stromal. 267 to 274 (GPPGTGKT) is an ATP binding site. Position 488 (histidine 488) interacts with Zn(2+). Glutamate 489 is a catalytic residue. Residues histidine 492 and aspartate 566 each coordinate Zn(2+). Residues 673 to 695 (PPENRVPSSTTTTPASAPTPAAV) form a disordered region. A compositionally biased stretch (low complexity) spans 679 to 695 (PSSTTTTPASAPTPAAV).

This sequence in the N-terminal section; belongs to the AAA ATPase family. In the C-terminal section; belongs to the peptidase M41 family. As to quaternary structure, interacts with CHIP and FTSH5. Heterohexamers with FTSH1, FTSH5 and FTSH8. May also form homooligomers. It depends on Zn(2+) as a cofactor. The FTSH2 precursor is ubiquitinated by CHIP in the cytoplasm. As to expression, expressed in cotyledons, cauline and rosette leaves, stems, sepals, flovers and siliques. Very low in roots.

The protein resides in the plastid. Its subcellular location is the chloroplast thylakoid membrane. Functionally, part of a complex that function as an ATP-dependent zinc metallopeptidase. Involved in the thylakoid formation and in the removal of damaged D1 in the photosystem II, preventing cell death under high-intensity light conditions, but not involved in thermotolerance. In Arabidopsis thaliana (Mouse-ear cress), this protein is ATP-dependent zinc metalloprotease FTSH 2, chloroplastic (FTSH2).